The chain runs to 373 residues: T-protein (373 aa).

The 90-residue stretch at 1-90 (MVAELTALRD…ESYTSENDKG (90 aa)) folds into the Chorismate mutase domain. The region spanning 99-361 (RPVVIVGGKG…DHAKRFLVES (263 aa)) is the Prephenate/arogenate dehydrogenase domain.

It in the C-terminal section; belongs to the prephenate/arogenate dehydrogenase family.

It localises to the cytoplasm. It carries out the reaction chorismate = prephenate. The enzyme catalyses prephenate + NAD(+) = 3-(4-hydroxyphenyl)pyruvate + CO2 + NADH. It participates in amino-acid biosynthesis; L-tyrosine biosynthesis; (4-hydroxyphenyl)pyruvate from prephenate (NAD(+) route): step 1/1. It functions in the pathway metabolic intermediate biosynthesis; prephenate biosynthesis; prephenate from chorismate: step 1/1. This is T-protein (tyrA) from Enterobacter agglomerans (Erwinia herbicola).